Consider the following 406-residue polypeptide: Imidazolonepropionase (406 aa).

Positions 74 and 76 each coordinate Fe(3+). 2 residues coordinate Zn(2+): His74 and His76. Residues Arg83, Tyr146, and His179 each coordinate 4-imidazolone-5-propanoate. An N-formimidoyl-L-glutamate-binding site is contributed by Tyr146. His240 serves as a coordination point for Fe(3+). Position 240 (His240) interacts with Zn(2+). Residue Glu243 participates in 4-imidazolone-5-propanoate binding. Residue Asp314 coordinates Fe(3+). Asp314 serves as a coordination point for Zn(2+). N-formimidoyl-L-glutamate is bound by residues Asn316 and Gly318. Ser319 is a 4-imidazolone-5-propanoate binding site.

It belongs to the metallo-dependent hydrolases superfamily. HutI family. It depends on Zn(2+) as a cofactor. Fe(3+) is required as a cofactor.

The protein resides in the cytoplasm. It carries out the reaction 4-imidazolone-5-propanoate + H2O = N-formimidoyl-L-glutamate. Its pathway is amino-acid degradation; L-histidine degradation into L-glutamate; N-formimidoyl-L-glutamate from L-histidine: step 3/3. Its function is as follows. Catalyzes the hydrolytic cleavage of the carbon-nitrogen bond in imidazolone-5-propanoate to yield N-formimidoyl-L-glutamate. It is the third step in the universal histidine degradation pathway. The protein is Imidazolonepropionase of Kosmotoga olearia (strain ATCC BAA-1733 / DSM 21960 / TBF 19.5.1).